We begin with the raw amino-acid sequence, 148 residues long: Lysozyme C (148 aa).

The N-terminal stretch at 1-18 (MKALTILGLVLLSVTVQG) is a signal peptide. Positions 19–148 (KIFERCELAR…VSQYVKGCGV (130 aa)) constitute a C-type lysozyme domain. Disulfide bonds link cysteine 24/cysteine 146, cysteine 48/cysteine 134, cysteine 83/cysteine 99, and cysteine 95/cysteine 113. Active-site residues include glutamate 53 and aspartate 71.

Belongs to the glycosyl hydrolase 22 family. Monomer.

The protein resides in the secreted. The catalysed reaction is Hydrolysis of (1-&gt;4)-beta-linkages between N-acetylmuramic acid and N-acetyl-D-glucosamine residues in a peptidoglycan and between N-acetyl-D-glucosamine residues in chitodextrins.. Lysozymes have primarily a bacteriolytic function; those in tissues and body fluids are associated with the monocyte-macrophage system and enhance the activity of immunoagents. Also plays a role in digestion in this species. The protein is Lysozyme C (LYZ) of Semnopithecus entellus (Northern plains gray langur).